The following is a 288-amino-acid chain: Energy-coupling factor transporter ATP-binding protein EcfA2 (288 aa).

The 244-residue stretch at 3-246 (IKLEQLGYCY…PDELVDLGLS (244 aa)) folds into the ABC transporter domain. 40–47 (GHTGSGKS) contributes to the ATP binding site.

This sequence belongs to the ABC transporter superfamily. Energy-coupling factor EcfA family. In terms of assembly, forms a stable energy-coupling factor (ECF) transporter complex composed of 2 membrane-embedded substrate-binding proteins (S component), 2 ATP-binding proteins (A component) and 2 transmembrane proteins (T component).

It localises to the cell membrane. ATP-binding (A) component of a common energy-coupling factor (ECF) ABC-transporter complex. Unlike classic ABC transporters this ECF transporter provides the energy necessary to transport a number of different substrates. The protein is Energy-coupling factor transporter ATP-binding protein EcfA2 of Listeria innocua serovar 6a (strain ATCC BAA-680 / CLIP 11262).